Consider the following 398-residue polypeptide: Phosphoglycerate kinase (398 aa).

Residues 23-25 (DFN), Arg38, 61-64 (HLGK), Arg122, and Arg155 each bind substrate. ATP contacts are provided by residues Lys206, Gly297, Glu328, and 354–357 (GGDS).

Belongs to the phosphoglycerate kinase family. In terms of assembly, monomer.

The protein localises to the cytoplasm. The enzyme catalyses (2R)-3-phosphoglycerate + ATP = (2R)-3-phospho-glyceroyl phosphate + ADP. It participates in carbohydrate degradation; glycolysis; pyruvate from D-glyceraldehyde 3-phosphate: step 2/5. The protein is Phosphoglycerate kinase of Clostridium novyi (strain NT).